A 597-amino-acid chain; its full sequence is MPISNPRKRPICVAQSFLSKHATKAELSQAVSRLESLTQQGIRLPFDLLASLLQQCGDTKSLKQGKWIHRHLKITGFKRPNTLLSNHLIGMYMKCGKPIDACKVFDQMHLRNLYSWNNMVSGYVKSGMLVRARVVFDSMPERDVVSWNTMVIGYAQDGNLHEALWFYKEFRRSGIKFNEFSFAGLLTACVKSRQLQLNRQAHGQVLVAGFLSNVVLSCSIIDAYAKCGQMESAKRCFDEMTVKDIHIWTTLISGYAKLGDMEAAEKLFCEMPEKNPVSWTALIAGYVRQGSGNRALDLFRKMIALGVKPEQFTFSSCLCASASIASLRHGKEIHGYMIRTNVRPNAIVISSLIDMYSKSGSLEASERVFRICDDKHDCVFWNTMISALAQHGLGHKALRMLDDMIKFRVQPNRTTLVVILNACSHSGLVEEGLRWFESMTVQHGIVPDQEHYACLIDLLGRAGCFKELMRKIEEMPFEPDKHIWNAILGVCRIHGNEELGKKAADELIKLDPESSAPYILLSSIYADHGKWELVEKLRGVMKKRRVNKEKAVSWIEIEKKVEAFTVSDGSHAHARKEEIYFILHNLAAVIEEEASRT.

13 PPR repeats span residues 45-79 (PFDL…GFKR), 81-111 (NTLL…MHLR), 112-142 (NLYS…MPER), 143-177 (DVVS…GIKF), 178-212 (NEFS…GFLS), 213-243 (NVVL…MTVK), 244-274 (DIHI…MPEK), 275-309 (NPVS…GVKP), 310-344 (EQFT…NVRP), 345-375 (NAIV…CDDK), 377-411 (DCVF…RVQP), 412-447 (NRTT…GIVP), and 448-478 (DQEH…MPFE). The interval 483–558 (IWNAILGVCR…EKAVSWIEIE (76 aa)) is type E motif. Residues 559–591 (KKVEAFTVSDGSHAHARKEEIYFILHNLAAVIE) are type E(+) motif.

The protein belongs to the PPR family. PCMP-E subfamily.

This chain is Pentatricopeptide repeat-containing protein At2g21090 (PCMP-E48), found in Arabidopsis thaliana (Mouse-ear cress).